The following is a 510-amino-acid chain: ATP synthase subunit alpha 1 (510 aa).

167 to 174 (GDRATGKT) is an ATP binding site.

It belongs to the ATPase alpha/beta chains family. As to quaternary structure, F-type ATPases have 2 components, CF(1) - the catalytic core - and CF(0) - the membrane proton channel. CF(1) has five subunits: alpha(3), beta(3), gamma(1), delta(1), epsilon(1). CF(0) has three main subunits: a(1), b(2) and c(9-12). The alpha and beta chains form an alternating ring which encloses part of the gamma chain. CF(1) is attached to CF(0) by a central stalk formed by the gamma and epsilon chains, while a peripheral stalk is formed by the delta and b chains.

It localises to the cell inner membrane. It carries out the reaction ATP + H2O + 4 H(+)(in) = ADP + phosphate + 5 H(+)(out). Functionally, produces ATP from ADP in the presence of a proton gradient across the membrane. The alpha chain is a regulatory subunit. The chain is ATP synthase subunit alpha 1 from Paraburkholderia xenovorans (strain LB400).